The chain runs to 198 residues: Fe/S biogenesis protein NfuA (198 aa).

2 residues coordinate [4Fe-4S] cluster: cysteine 155 and cysteine 158.

Belongs to the NfuA family. As to quaternary structure, homodimer. [4Fe-4S] cluster serves as cofactor.

Functionally, involved in iron-sulfur cluster biogenesis. Binds a 4Fe-4S cluster, can transfer this cluster to apoproteins, and thereby intervenes in the maturation of Fe/S proteins. Could also act as a scaffold/chaperone for damaged Fe/S proteins. The chain is Fe/S biogenesis protein NfuA from Haemophilus influenzae (strain 86-028NP).